The primary structure comprises 172 residues: Translationally-controlled tumor protein (172 aa).

The TCTP domain maps to 1–172 (MIIYRDLISH…FKDGLEMEKC (172 aa)). Residue Ser46 is modified to Phosphoserine; by PLK1. Ser53 carries the phosphoserine modification. At Ser64 the chain carries Phosphoserine; by PLK1. The required for reduction of TSC22D1 protein stability stretch occupies residues 70–172 (VDIVMNHHLQ…FKDGLEMEKC (103 aa)).

The protein belongs to the TCTP family. As to quaternary structure, homodimer. Interacts with STEAP3. Interacts with TSC22D1; interaction results in the destabilization of TSC22D1 protein.

Its subcellular location is the cytoplasm. In terms of biological role, involved in calcium binding and microtubule stabilization. Acts as a negative regulator of TSC22D1-mediated apoptosis, via interaction with and destabilization of TSC22D1 protein. This chain is Translationally-controlled tumor protein (TPT1), found in Oryctolagus cuniculus (Rabbit).